The chain runs to 397 residues: Na(+)/H(+) antiporter NhaA 3 (397 aa).

11 helical membrane-spanning segments follow: residues Ala18–Phe38, Leu63–Leu83, Ile98–Trp118, Gly129–Gly149, Ile158–Phe178, Ser181–Cys201, Thr207–Leu224, Val269–Met289, Leu306–Trp326, Gly340–Phe360, and Leu373–Ala393.

This sequence belongs to the NhaA Na(+)/H(+) (TC 2.A.33) antiporter family.

The protein localises to the cell inner membrane. The catalysed reaction is Na(+)(in) + 2 H(+)(out) = Na(+)(out) + 2 H(+)(in). Na(+)/H(+) antiporter that extrudes sodium in exchange for external protons. In Saccharophagus degradans (strain 2-40 / ATCC 43961 / DSM 17024), this protein is Na(+)/H(+) antiporter NhaA 3.